The primary structure comprises 348 residues: Dihydroorotase (348 aa).

Positions 17 and 19 each coordinate Zn(2+). Substrate contacts are provided by residues 19 to 21 (HLR) and Asn-45. Positions 103, 140, and 178 each coordinate Zn(2+). At Lys-103 the chain carries N6-carboxylysine. Position 140 (His-140) interacts with substrate. Leu-223 contributes to the substrate binding site. Asp-251 contacts Zn(2+). Asp-251 is an active-site residue. Positions 255 and 267 each coordinate substrate.

This sequence belongs to the metallo-dependent hydrolases superfamily. DHOase family. Class II DHOase subfamily. As to quaternary structure, homodimer. Requires Zn(2+) as cofactor.

It catalyses the reaction (S)-dihydroorotate + H2O = N-carbamoyl-L-aspartate + H(+). It functions in the pathway pyrimidine metabolism; UMP biosynthesis via de novo pathway; (S)-dihydroorotate from bicarbonate: step 3/3. In terms of biological role, catalyzes the reversible cyclization of carbamoyl aspartate to dihydroorotate. The chain is Dihydroorotase from Yersinia enterocolitica serotype O:8 / biotype 1B (strain NCTC 13174 / 8081).